Reading from the N-terminus, the 274-residue chain is Penicillin-insensitive murein endopeptidase (274 aa).

The N-terminal stretch at 1-19 (MNKTAIALLALLASSASLA) is a signal peptide. 3 disulfide bridges follow: Cys44-Cys265, Cys187-Cys235, and Cys216-Cys223. Positions 110, 113, 120, 147, 150, and 211 each coordinate Zn(2+). A disordered region spans residues 227 to 274 (PLPPPGDGCGAELQSWFEPPKPGTTKPEKKTPPPLPPSCQALLDEHVI).

Belongs to the peptidase M74 family. In terms of assembly, dimer. It depends on Zn(2+) as a cofactor.

Its subcellular location is the periplasm. In terms of biological role, murein endopeptidase that cleaves the D-alanyl-meso-2,6-diamino-pimelyl amide bond that connects peptidoglycan strands. Likely plays a role in the removal of murein from the sacculus. This chain is Penicillin-insensitive murein endopeptidase, found in Escherichia coli O6:K15:H31 (strain 536 / UPEC).